We begin with the raw amino-acid sequence, 804 residues long: Cyclic di-GMP-binding protein (804 aa).

An N-terminal signal peptide occupies residues 1–18; the sequence is MKMVSLIALLVFATGAQA. At 19 to 766 the chain is on the periplasmic side; the sequence is APIASKAPAH…DWYMHNHPFR (748 aa). The tract at residues 24-69 is disordered; the sequence is KAPAHQPTGSDLPPLPAAAPVAPAAQPSAQAVDPASAAPASDAGSA. A helical membrane pass occupies residues 767 to 787; it reads VIVVGLVGCLLVVAVLVRALF. At 788 to 804 the chain is on the cytoplasmic side; sequence RHAMFRRRQLQEERQKS.

It belongs to the AcsB/BcsB family. As to quaternary structure, tightly associated with the cellulose synthase catalytic subunit.

Its subcellular location is the cell inner membrane. It functions in the pathway glycan metabolism; bacterial cellulose biosynthesis. In terms of biological role, binds the cellulose synthase activator, bis-(3'-5') cyclic diguanylic acid (c-di-GMP). The protein is Cyclic di-GMP-binding protein (bcsBI) of Komagataeibacter xylinus (Gluconacetobacter xylinus).